The sequence spans 121 residues: Protein SNORC (121 aa).

The first 24 residues, 1 to 24, serve as a signal peptide directing secretion; that stretch reads MASCLALRMALLLVSGVLAPAVLT. Topologically, residues 25–92 are extracellular; that stretch reads DDVPQEPVPT…QGGGSLGPGA (68 aa). The disordered stretch occupies residues 28–84; that stretch reads PQEPVPTLWNEPAELPSGEGPVESTSPGREPVDTGPPAPTVAPGPEDSTAQERLDQG. Residues 93–113 form a helical membrane-spanning segment; the sequence is IAAIVIAALLATCVVLALVVV. Over 114–121 the chain is Cytoplasmic; it reads ALRKFSAS.

In terms of assembly, interacts (via the extracellular domain) with FGF2. Expressed in cartilage.

It is found in the membrane. The protein localises to the cytoplasm. Its subcellular location is the secreted. The protein resides in the extracellular space. It localises to the extracellular matrix. Functionally, plays a role in the regulation of chondrocyte maturation and postnatal endochondral ossification. May inhibit cell growth stimulation induced by FGF2. The protein is Protein SNORC of Homo sapiens (Human).